A 541-amino-acid chain; its full sequence is MDSRRSLLVLALIFISFLVYQQWQLDKNPPVQTEQTTSITATSDVPASSPSNSQAIADSQTRGRIITLENDVFRLKIDTLGGDVISSELLKYDAELDSKTPFELLKDTKEHIYIAQSGLIGKNGIDTRSGRAQYQIEGDNFKLAEGQESLSVPLLFEKDGVTYQKIFVLKRGSYDLGVDYKIDNQSGQAIEVEPYGQLKHSIVESSGNVAMPTYTGGAYSSSETNYKKYSFSDMQDNNLSIDTKAGWVAVLQHYFVSAWIPNQDVNNQLYTITDSKNNVASIGYRGSVVTIPAGSQETITSSLWTGPKLQNQMATVANNLDLTVDYGWAWFIAKPLFWLLTFIQGIVSNWGLAIICVTIVVKAILYPLTKAQYTSMAKMRILQPKMQEMRERFGDDRQRMSQEMMKLYKEEKVNPLGGCLPILLQMPIFIALYWTFLEAVELRHAPFFGWIQDLSAQDPYYILPILMGISMFLLQKMSPTPVTDPTQQKVMNFMPLVFMFFFLWFPSGLVLYWLVSNLITIAQQQLIYRGLEKKGLHSRKK.

The helical transmembrane segment at 6–26 threads the bilayer; the sequence is SLLVLALIFISFLVYQQWQLD. The interval 34–56 is disordered; that stretch reads EQTTSITATSDVPASSPSNSQAI. Helical transmembrane passes span 337–357, 416–436, 454–474, and 495–515; these read FWLLTFIQGIVSNWGLAIICV, LGGCLPILLQMPIFIALYWTF, LSAQDPYYILPILMGISMFLL, and PLVFMFFFLWFPSGLVLYWLV.

The protein belongs to the OXA1/ALB3/YidC family. Type 1 subfamily. In terms of assembly, interacts with the Sec translocase complex via SecD. Specifically interacts with transmembrane segments of nascent integral membrane proteins during membrane integration.

It localises to the cell inner membrane. Its function is as follows. Required for the insertion and/or proper folding and/or complex formation of integral membrane proteins into the membrane. Involved in integration of membrane proteins that insert both dependently and independently of the Sec translocase complex, as well as at least some lipoproteins. Aids folding of multispanning membrane proteins. The polypeptide is Membrane protein insertase YidC (Haemophilus influenzae (strain ATCC 51907 / DSM 11121 / KW20 / Rd)).